Here is a 203-residue protein sequence, read N- to C-terminus: Glycerol-3-phosphate acyltransferase (203 aa).

Residues 1–3 (MSA) are Periplasmic-facing. A helical membrane pass occupies residues 4 to 24 (IAPGMILFAYLCGSISSAILV). The Cytoplasmic segment spans residues 25–52 (CRIAGLPDPRESGSGNPGATNVLRIGGK). A helical membrane pass occupies residues 53–73 (GAAVAVLIFDILKGMLPVWGA). Residues 74–80 (YALGVTP) lie on the Periplasmic side of the membrane. The chain crosses the membrane as a helical span at residues 81–101 (FWLGLIAIAACLGHIWPVFFG). Residues 102–111 (FKGGKGVATA) are Cytoplasmic-facing. The helical transmembrane segment at 112–132 (FGAIAPIGWDLTGVMAGTWLL) threads the bilayer. The Periplasmic segment spans residues 133–137 (TVLLS). The helical transmembrane segment at 138–158 (GYSSLGAIVSALIAPFYVWWF) threads the bilayer. Residues 159–203 (KPQFTFPVSMLSCLILLRHHDNIQRLWRRQETKIWTKLKKKRQKD) are Cytoplasmic-facing.

It belongs to the PlsY family. Probably interacts with PlsX.

It localises to the cell inner membrane. It carries out the reaction sn-glycerol 3-phosphate + an acyl-CoA = a 1-acyl-sn-glycero-3-phosphate + CoA. It catalyses the reaction a fatty acyl-[ACP] + sn-glycerol 3-phosphate = a 1-acyl-sn-glycero-3-phosphate + holo-[ACP]. Its pathway is lipid metabolism; phospholipid metabolism. Its function is as follows. Catalyzes the transfer of an acyl group from acyl-ACP to glycerol-3-phosphate (G3P) to form lysophosphatidic acid (LPA). This enzyme can also utilize acyl-CoA as fatty acyl donor, but not acyl-PO(4). The sequence is that of Glycerol-3-phosphate acyltransferase from Salmonella agona (strain SL483).